The following is a 937-amino-acid chain: Outer membrane usher protein CS3-2 (937 aa).

Belongs to the fimbrial export usher family. Post-translationally, a 97 kDa form of the protein is thought to be due to post-translational processing of isoform 104 kDa.

It localises to the cell outer membrane. In terms of biological role, these proteins are essential for the biogenesis of mature CS3 pili, but not for synthesis of the CS3 pilin subunit. The polypeptide is Outer membrane usher protein CS3-2 (Escherichia coli).